Consider the following 355-residue polypeptide: MSTGSSDRKDDVKLLELLNSIDEQFLVPYKKPEDLRKISSTTKLQGSTPTKELDKLASVLKAHCTKIGIVCKPGTFDNNHKVVITEIQNFSRPLFYLLSLFPLFYNNKDCPKYFTDQLDESTLQLLDGLRDFIAELQERLKNDENASLDKERLTSVGKIFNACDSLSNCSKAGPYGILANILKDNVAIMDDTMNEIKEWLEEPDFSANSDDIFLDFEDSESESDSQKEEFDQEKVYENIKLFFDGFTRKIKLIKLLVSTFRKTLVSKDFTPKRNQAETLDSIHTYLKEIQLLLDEVVSTVQFEPKNFTNEEVKEEQAALVAVTKKVLIQMSKLYEGDPKRKKWIDTWEIKFNELF.

The protein localises to the cytoplasm. This is an uncharacterized protein from Saccharomyces cerevisiae (strain ATCC 204508 / S288c) (Baker's yeast).